The following is a 467-amino-acid chain: Adenosylhomocysteinase (467 aa).

T68, D144, and E169 together coordinate substrate. 170–172 (TTT) is a binding site for NAD(+). Substrate contacts are provided by K199 and D203. Residues N204, 233-238 (GYGDVG), E256, N305, 326-328 (IGH), and N373 each bind NAD(+).

Belongs to the adenosylhomocysteinase family. It depends on NAD(+) as a cofactor.

The protein resides in the cytoplasm. It catalyses the reaction S-adenosyl-L-homocysteine + H2O = L-homocysteine + adenosine. Its pathway is amino-acid biosynthesis; L-homocysteine biosynthesis; L-homocysteine from S-adenosyl-L-homocysteine: step 1/1. Its function is as follows. May play a key role in the regulation of the intracellular concentration of adenosylhomocysteine. The polypeptide is Adenosylhomocysteinase (Acinetobacter baylyi (strain ATCC 33305 / BD413 / ADP1)).